The following is an 82-amino-acid chain: Acyl carrier protein (82 aa).

Residues 4–79 (PEMEARLKQI…DALNYIEQKL (76 aa)) form the Carrier domain. Residue Ser39 is modified to O-(pantetheine 4'-phosphoryl)serine.

Belongs to the acyl carrier protein (ACP) family. Post-translationally, 4'-phosphopantetheine is transferred from CoA to a specific serine of apo-ACP by AcpS. This modification is essential for activity because fatty acids are bound in thioester linkage to the sulfhydryl of the prosthetic group.

It is found in the cytoplasm. Its pathway is lipid metabolism; fatty acid biosynthesis. Its function is as follows. Carrier of the growing fatty acid chain in fatty acid biosynthesis. The sequence is that of Acyl carrier protein from Roseiflexus castenholzii (strain DSM 13941 / HLO8).